The following is a 111-amino-acid chain: Fluoride-specific ion channel FluC (111 aa).

Helical transmembrane passes span G2–L22, G36–I56, and F71–I91. G79 and T82 together coordinate Na(+).

Belongs to the fluoride channel Fluc/FEX (TC 1.A.43) family.

It localises to the cell inner membrane. It catalyses the reaction fluoride(in) = fluoride(out). Its activity is regulated as follows. Na(+) is not transported, but it plays an essential structural role and its presence is essential for fluoride channel function. In terms of biological role, fluoride-specific ion channel. Important for reducing fluoride concentration in the cell, thus reducing its toxicity. This Francisella tularensis subsp. holarctica (strain FTNF002-00 / FTA) protein is Fluoride-specific ion channel FluC.